The sequence spans 233 residues: Thymidylate kinase (233 aa).

Gly-10–Thr-17 serves as a coordination point for ATP.

Belongs to the thymidylate kinase family.

The catalysed reaction is dTMP + ATP = dTDP + ADP. In terms of biological role, phosphorylation of dTMP to form dTDP in both de novo and salvage pathways of dTTP synthesis. This chain is Thymidylate kinase, found in Bifidobacterium longum subsp. infantis (strain ATCC 15697 / DSM 20088 / JCM 1222 / NCTC 11817 / S12).